Here is an 88-residue protein sequence, read N- to C-terminus: Large ribosomal subunit protein bL27 (88 aa).

Positions 1–23 (MAHKKGTGSTRNGRDSNAQRLGV) are disordered. Residues 7 to 19 (TGSTRNGRDSNAQ) are compositionally biased toward polar residues.

The protein belongs to the bacterial ribosomal protein bL27 family.

This is Large ribosomal subunit protein bL27 (rpmA) from Synechococcus elongatus (strain ATCC 33912 / PCC 7942 / FACHB-805) (Anacystis nidulans R2).